The sequence spans 487 residues: N-succinylglutamate 5-semialdehyde dehydrogenase (487 aa).

Residue 221–226 (GSSDTG) participates in NAD(+) binding. Active-site residues include Glu-244 and Cys-278.

It belongs to the aldehyde dehydrogenase family. AstD subfamily.

The catalysed reaction is N-succinyl-L-glutamate 5-semialdehyde + NAD(+) + H2O = N-succinyl-L-glutamate + NADH + 2 H(+). Its pathway is amino-acid degradation; L-arginine degradation via AST pathway; L-glutamate and succinate from L-arginine: step 4/5. Functionally, catalyzes the NAD-dependent reduction of succinylglutamate semialdehyde into succinylglutamate. The protein is N-succinylglutamate 5-semialdehyde dehydrogenase of Burkholderia lata (strain ATCC 17760 / DSM 23089 / LMG 22485 / NCIMB 9086 / R18194 / 383).